Here is a 257-residue protein sequence, read N- to C-terminus: Deoxyribose-phosphate aldolase (257 aa).

Aspartate 102 functions as the Proton donor/acceptor in the catalytic mechanism. Residue lysine 165 is the Schiff-base intermediate with acetaldehyde of the active site. Lysine 199 serves as the catalytic Proton donor/acceptor.

It belongs to the DeoC/FbaB aldolase family. DeoC type 2 subfamily.

The protein localises to the cytoplasm. It carries out the reaction 2-deoxy-D-ribose 5-phosphate = D-glyceraldehyde 3-phosphate + acetaldehyde. It functions in the pathway carbohydrate degradation; 2-deoxy-D-ribose 1-phosphate degradation; D-glyceraldehyde 3-phosphate and acetaldehyde from 2-deoxy-alpha-D-ribose 1-phosphate: step 2/2. Functionally, catalyzes a reversible aldol reaction between acetaldehyde and D-glyceraldehyde 3-phosphate to generate 2-deoxy-D-ribose 5-phosphate. The sequence is that of Deoxyribose-phosphate aldolase from Photobacterium profundum (strain SS9).